The following is a 423-amino-acid chain: Core protease OPG083 (423 aa).

Residues histidine 241, aspartate 248, and cysteine 328 contribute to the active site.

The protein belongs to the peptidase C57 family.

It is found in the virion. Late protein responsible for processing most or all of the viral core and membrane proteins known to undergo morphogenesis-associated proteolysis. These proteolytic events are involved in the transformation of immature virions (IV) into mature virions (MV). Probably cleaves at least the OPG129/A3, OPG136/A10, OPG098/L4, and OPG144/A17 precursors preferentially at Ala-Gly-|-Ala motifs. Also seems to process Ala-Gly-|-Ser and Ala-Gly-|-Thr motifs. This is Core protease OPG083 (OPG083) from Bos taurus (Bovine).